Here is a 717-residue protein sequence, read N- to C-terminus: Nuclear factor of activated T-cells, cytoplasmic 1 (717 aa).

The disordered stretch occupies residues Met1 to Lys38. The calcineurin-binding stretch occupies residues Pro120–Thr125. The interval Leu128–Glu220 is transactivation domain A (TAD-A). Residues Pro202–Thr298 are disordered. Polar residues predominate over residues Gln203–Thr216. 2 consecutive repeat copies span residues Ser205–Glu221 and Ser235–Glu251. The interval Ser205 to Asp300 is 3 X SP repeats. 2 positions are modified to phosphoserine: Ser235 and Ser239. Over residues His238–Glu250 the composition is skewed to polar residues. Ser247 is modified (phosphoserine; by PKA). Residues Lys267–Lys269 carry the Nuclear localization signal motif. A phosphoserine; by PKA mark is found at Ser271 and Ser296. Repeat unit 3 spans residues Ser284–Asp300. Positions Ser312 to Thr323 match the Nuclear export signal motif. Residues Pro411 to Ala593 enclose the RHD domain. Residues Arg440–Gly447 mediate DNA binding. The Nuclear localization signal signature appears at Lys683–Lys685.

Member of the multicomponent NFATC transcription complex that consists of at least two components, a pre-existing cytoplasmic component NFATC2 and an inducible nuclear component NFATC1. Other members such as NFATC4, NFATC3 or members of the activating protein-1 family, MAF, GATA4 and Cbp/p300 can also bind the complex. NFATC proteins bind to DNA as monomers. Interacts with HOMER2 and HOMER3; this interaction may compete with calcineurin/PPP3CA-binding and hence prevent NFATC1 dephosphorylation and activation. Interacts with TLE6/GRG6. Post-translationally, phosphorylated by NFATC-kinase and GSK3B; phosphorylation induces NFATC1 nuclear exit and dephosphorylation by calcineurin promotes nuclear import. Phosphorylation by PKA and DYRK2 negatively modulates nuclear accumulation, and promotes subsequent phosphorylation by GSK3B or casein kinase 1. As to expression, expressed in the submandibular gland (at protein level). Expressed in basal epidermal cells (at protein level). Expressed in spleen, skeletal muscle and skin. Express in the lung and thymus. Weakly expressed in heart, brain, liver and kidney. Not expressed in testis. Expressed in osteoclasts. Also expressed during TNFSF11/RANKL-induced differentiation of bone marrow-derived macrophages to osteoclasts.

The protein resides in the cytoplasm. It localises to the nucleus. Functionally, plays a role in the inducible expression of cytokine genes in T-cells, especially in the induction of the IL-2 or IL-4 gene transcription. Also controls gene expression in embryonic cardiac cells. Could regulate not only the activation and proliferation but also the differentiation and programmed death of T-lymphocytes as well as lymphoid and non-lymphoid cells. Required for osteoclastogenesis and regulates many genes important for osteoclast differentiation and function. The chain is Nuclear factor of activated T-cells, cytoplasmic 1 (Nfatc1) from Mus musculus (Mouse).